Here is a 149-residue protein sequence, read N- to C-terminus: Deoxyuridine 5'-triphosphate nucleotidohydrolase (149 aa).

Residues 68–70, Asn-81, and 85–87 each bind substrate; these read RSG and LID.

It belongs to the dUTPase family. Requires Mg(2+) as cofactor.

It carries out the reaction dUTP + H2O = dUMP + diphosphate + H(+). It functions in the pathway pyrimidine metabolism; dUMP biosynthesis; dUMP from dCTP (dUTP route): step 2/2. This enzyme is involved in nucleotide metabolism: it produces dUMP, the immediate precursor of thymidine nucleotides and it decreases the intracellular concentration of dUTP so that uracil cannot be incorporated into DNA. The sequence is that of Deoxyuridine 5'-triphosphate nucleotidohydrolase from Aromatoleum aromaticum (strain DSM 19018 / LMG 30748 / EbN1) (Azoarcus sp. (strain EbN1)).